Here is a 361-residue protein sequence, read N- to C-terminus: MKTPHILMMAAGTGGHVFPALAVSEELSKRGAIIHWLGTPNGMENGLVAPTGYPFHAIEMQGLRGKGIGRLLKMPVTLLSATMAVIKIIRGNKIDMVVGFGGYVSAPGGIAARLTKTPLIIHEQNAIAGMSNRYLAKMATKVLQAFENTFGNDQLDAKLETVGNPVRNAISGVAEPTIRYDINDQSPLKLLVVGGSLGAQVLNDTVPKALALIERPFEVRHQCGRHNEVTTQSAYASEDLSAHEFTVQPFIDDMAAAYNWADIVVCRAGALTVTEIQNVGIAAIFVPLPSAVDDHQTANARTLTLHKAAILLPQNELTPKRLSDELALLDRAACLEMAKKGHALANRQACQHVADIIWQAL.

UDP-N-acetyl-alpha-D-glucosamine-binding positions include 13–15 (TGG), Asn-125, Arg-167, Ser-196, Ile-251, 270–275 (ALTVTE), and Gln-296.

This sequence belongs to the glycosyltransferase 28 family. MurG subfamily.

It is found in the cell inner membrane. It catalyses the reaction di-trans,octa-cis-undecaprenyl diphospho-N-acetyl-alpha-D-muramoyl-L-alanyl-D-glutamyl-meso-2,6-diaminopimeloyl-D-alanyl-D-alanine + UDP-N-acetyl-alpha-D-glucosamine = di-trans,octa-cis-undecaprenyl diphospho-[N-acetyl-alpha-D-glucosaminyl-(1-&gt;4)]-N-acetyl-alpha-D-muramoyl-L-alanyl-D-glutamyl-meso-2,6-diaminopimeloyl-D-alanyl-D-alanine + UDP + H(+). The protein operates within cell wall biogenesis; peptidoglycan biosynthesis. Functionally, cell wall formation. Catalyzes the transfer of a GlcNAc subunit on undecaprenyl-pyrophosphoryl-MurNAc-pentapeptide (lipid intermediate I) to form undecaprenyl-pyrophosphoryl-MurNAc-(pentapeptide)GlcNAc (lipid intermediate II). The chain is UDP-N-acetylglucosamine--N-acetylmuramyl-(pentapeptide) pyrophosphoryl-undecaprenol N-acetylglucosamine transferase from Psychrobacter arcticus (strain DSM 17307 / VKM B-2377 / 273-4).